The chain runs to 413 residues: Gamma-glutamyl phosphate reductase (413 aa).

This sequence belongs to the gamma-glutamyl phosphate reductase family.

The protein localises to the cytoplasm. The catalysed reaction is L-glutamate 5-semialdehyde + phosphate + NADP(+) = L-glutamyl 5-phosphate + NADPH + H(+). The protein operates within amino-acid biosynthesis; L-proline biosynthesis; L-glutamate 5-semialdehyde from L-glutamate: step 2/2. Functionally, catalyzes the NADPH-dependent reduction of L-glutamate 5-phosphate into L-glutamate 5-semialdehyde and phosphate. The product spontaneously undergoes cyclization to form 1-pyrroline-5-carboxylate. The polypeptide is Gamma-glutamyl phosphate reductase (Alkaliphilus oremlandii (strain OhILAs) (Clostridium oremlandii (strain OhILAs))).